The chain runs to 153 residues: MLNKCFIKNYNYNIQLVRYIESKHSNTFQIIKDYMDTLVYSVKSKFDDYDIALLTMLFETKRMSQNTKVKRVYLYNSYSFIHQNYITALLKEAFKGVIEIVEKDTLNLTYEGLQKKNVDIIISNVKLEIKDIPVVQISDMPTDKELSKIKKLL.

It belongs to the AtxA/AcpA family.

This is Putative trans-acting regulator pXO2-62/BXB0076/GBAA_pXO2_0076 from Bacillus anthracis.